We begin with the raw amino-acid sequence, 386 residues long: NADH-ubiquinone oxidoreductase 49 kDa subunit homolog (386 aa).

The protein belongs to the complex I 49 kDa subunit family.

The protein resides in the mitochondrion. It catalyses the reaction a ubiquinone + NADH + 5 H(+)(in) = a ubiquinol + NAD(+) + 4 H(+)(out). Its function is as follows. Core subunit of the mitochondrial membrane respiratory chain NADH dehydrogenase (Complex I) that is believed to belong to the minimal assembly required for catalysis. Complex I functions in the transfer of electrons from NADH to the respiratory chain. The immediate electron acceptor for the enzyme is believed to be ubiquinone. Component of the iron-sulfur (IP) fragment of the enzyme. Component of the iron-sulfur (IP) fragment of the enzyme. This chain is NADH-ubiquinone oxidoreductase 49 kDa subunit homolog (NAD7), found in Trypanosoma brucei brucei.